A 307-amino-acid polypeptide reads, in one-letter code: uncharacterized protein (307 aa).

In terms of domain architecture, ABC transporter spans 5–233 (VQTNGLTKTY…NTEYIELVTP (229 aa)). 37 to 44 (GPNGAGKT) is an ATP binding site.

It belongs to the ABC transporter superfamily.

This is an uncharacterized protein from Bacillus subtilis (strain 168).